A 552-amino-acid chain; its full sequence is Putative pentatricopeptide repeat-containing protein At1g64310 (552 aa).

PPR repeat units lie at residues 39-69, 70-104, 105-139, 140-170, 171-205, 206-240, 241-271, 272-306, 307-341, 342-372, 373-407, 408-438, and 444-474; these read DPYF…FPER, SVFL…DTRP, DNFT…GLGF, DQIC…IPDP, DLAL…GHQP, NCYT…NLDS, HSYV…ISEP, DLVA…GKKP, DCVL…GLEL, DIKV…IPEK, NIVS…GLIP, DEIT…MKSE, and QTEH…LQKP. The segment at 479 to 552 is type E motif; degenerate; sequence ILGALLSCCE…GGKLPGISWF (74 aa).

This sequence belongs to the PPR family. PCMP-E subfamily.

The protein is Putative pentatricopeptide repeat-containing protein At1g64310 (PCMP-E65) of Arabidopsis thaliana (Mouse-ear cress).